Consider the following 171-residue polypeptide: Der GTPase-activating protein YihI (171 aa).

Disordered regions lie at residues 1 to 99 and 145 to 171; these read MKKP…QAEL and LSYD…RGGN. Over residues 20-30 the composition is skewed to basic and acidic residues; the sequence is TREELNQEARD. Basic residues predominate over residues 31–40; it reads RKRLKKHRGH. Acidic residues predominate over residues 147–160; sequence YDDDEEDDEEDEKQ.

It belongs to the YihI family. As to quaternary structure, interacts with Der.

In terms of biological role, a GTPase-activating protein (GAP) that modifies Der/EngA GTPase function. May play a role in ribosome biogenesis. The sequence is that of Der GTPase-activating protein YihI from Salmonella agona (strain SL483).